The chain runs to 516 residues: Maturase K (516 aa).

Belongs to the intron maturase 2 family. MatK subfamily.

The protein resides in the plastid. The protein localises to the chloroplast. Its function is as follows. Usually encoded in the trnK tRNA gene intron. Probably assists in splicing its own and other chloroplast group II introns. The protein is Maturase K of Chara connivens (Convergent stonewort).